A 308-amino-acid polypeptide reads, in one-letter code: Oligopeptide transport ATP-binding protein AmiF (308 aa).

The ABC transporter domain maps to 6 to 251; the sequence is VEIKDLEISF…PIHPYTQALL (246 aa). 42 to 49 serves as a coordination point for ATP; that stretch reads GESGSGKT.

This sequence belongs to the ABC transporter superfamily.

The protein localises to the cell membrane. Functionally, part of the binding-protein-dependent transport system for oligopeptides. Probably responsible for energy coupling to the transport system. This chain is Oligopeptide transport ATP-binding protein AmiF (amiF), found in Streptococcus pneumoniae serotype 4 (strain ATCC BAA-334 / TIGR4).